Here is a 348-residue protein sequence, read N- to C-terminus: Phenylalanine--tRNA ligase alpha subunit (348 aa).

Residue Glu259 participates in Mg(2+) binding.

Belongs to the class-II aminoacyl-tRNA synthetase family. Phe-tRNA synthetase alpha subunit type 1 subfamily. As to quaternary structure, tetramer of two alpha and two beta subunits. The cofactor is Mg(2+).

Its subcellular location is the cytoplasm. The enzyme catalyses tRNA(Phe) + L-phenylalanine + ATP = L-phenylalanyl-tRNA(Phe) + AMP + diphosphate + H(+). The protein is Phenylalanine--tRNA ligase alpha subunit of Levilactobacillus brevis (strain ATCC 367 / BCRC 12310 / CIP 105137 / JCM 1170 / LMG 11437 / NCIMB 947 / NCTC 947) (Lactobacillus brevis).